The following is a 354-amino-acid chain: Cytoplasmic tRNA 2-thiolation protein 1 (354 aa).

Belongs to the TtcA family. CTU1/NCS6/ATPBD3 subfamily.

It localises to the cytoplasm. It participates in tRNA modification; 5-methoxycarbonylmethyl-2-thiouridine-tRNA biosynthesis. Functionally, plays a central role in 2-thiolation of mcm(5)S(2)U at tRNA wobble positions of tRNA(Lys), tRNA(Glu) and tRNA(Gln). Directly binds tRNAs and probably acts by catalyzing adenylation of tRNAs, an intermediate required for 2-thiolation. It is unclear whether it acts as a sulfurtransferase that transfers sulfur from thiocarboxylated URM1 onto the uridine of tRNAs at wobble position. Prior mcm(5) tRNA modification by the elongator complex is required for 2-thiolation. May also be involved in protein urmylation. This chain is Cytoplasmic tRNA 2-thiolation protein 1, found in Laccaria bicolor (strain S238N-H82 / ATCC MYA-4686) (Bicoloured deceiver).